A 1760-amino-acid polypeptide reads, in one-letter code: Chitin synthase A (1760 aa).

A glycan (N-linked (GlcNAc...) asparagine) is linked at Asn157. 2 helical membrane passes run 729-749 (IWTG…LRFV) and 765-785 (LVLV…IIAF). 2 N-linked (GlcNAc...) asparagine glycosylation sites follow: Asn876 and Asn996. The chain crosses the membrane as a helical span at residues 1027–1047 (ILLAFTCLICAVILVKFLAAL). Asn1392 carries N-linked (GlcNAc...) asparagine glycosylation. Helical transmembrane passes span 1417 to 1437 (FVVL…VYLG), 1449 to 1469 (IPII…IIFI), and 1477 to 1497 (IGWM…LPMY). N-linked (GlcNAc...) asparagine glycosylation is found at Asn1557, Asn1645, and Asn1650. The tract at residues 1670–1691 (DNLLGVPRPNSRSPVGGYTSRP) is disordered. The region spanning 1702 to 1758 (GPDEMAITDAIRSCLAEVDLDTVTKKQVRALVEQRLQATLTGDKRAFLDRQIDQELA) is the DEK-C domain.

It belongs to the chitin synthase family. Class V subfamily.

The protein localises to the cell membrane. It catalyses the reaction [(1-&gt;4)-N-acetyl-beta-D-glucosaminyl](n) + UDP-N-acetyl-alpha-D-glucosamine = [(1-&gt;4)-N-acetyl-beta-D-glucosaminyl](n+1) + UDP + H(+). In terms of biological role, polymerizes chitin, a structural polymer of the cell wall and septum, by transferring the sugar moiety of UDP-GlcNAc to the non-reducing end of the growing chitin polymer. Plays an important role in cell-wall formation during both hyphal growth and conidiation. This Aspergillus oryzae (strain ATCC 42149 / RIB 40) (Yellow koji mold) protein is Chitin synthase A.